Consider the following 560-residue polypeptide: DNA ligase B (560 aa).

The N6-AMP-lysine intermediate role is filled by Lys-124.

The protein belongs to the NAD-dependent DNA ligase family. LigB subfamily.

The enzyme catalyses NAD(+) + (deoxyribonucleotide)n-3'-hydroxyl + 5'-phospho-(deoxyribonucleotide)m = (deoxyribonucleotide)n+m + AMP + beta-nicotinamide D-nucleotide.. Its function is as follows. Catalyzes the formation of phosphodiester linkages between 5'-phosphoryl and 3'-hydroxyl groups in double-stranded DNA using NAD as a coenzyme and as the energy source for the reaction. This chain is DNA ligase B, found in Shigella flexneri.